We begin with the raw amino-acid sequence, 225 residues long: Elongation factor 1-beta (225 aa).

The region spanning 2 to 90 (GFGDLKTPAG…PSSVEDTTGS (89 aa)) is the GST C-terminal domain. Lys7 carries the post-translational modification N6-acetyllysine. Phosphoserine is present on residues Ser42 and Ser83. A disordered region spans residues 73–115 (KKSLGKYGPSSVEDTTGSGAADAKDDDDIDLFGSDDEEESEEA). At Thr88 the chain carries Phosphothreonine. Residues 96–113 (KDDDDIDLFGSDDEEESE) show a composition bias toward acidic residues. Residue Ser106 is modified to Phosphoserine. Lys147 is covalently cross-linked (Glycyl lysine isopeptide (Lys-Gly) (interchain with G-Cter in SUMO2)). Residue Ser174 is modified to Phosphoserine.

This sequence belongs to the EF-1-beta/EF-1-delta family. EF-1 is composed of 4 subunits: alpha, beta (alpha subunit of the eEF1B subcomplex), delta (beta subunit of the eEF1B subcomplex), and gamma (gamma subunit of the eEF1B subcomplex). Interacts with elongation factor EEF1A1. Phosphorylation affects the GDP/GTP exchange rate.

Functionally, catalytic subunit of the guanine nucleotide exchange factor (GEF) (eEF1B subcomplex) of the eukaryotic elongation factor 1 complex (eEF1). Stimulates the exchange of GDP for GTP on elongation factor 1A (eEF1A), probably by displacing GDP from the nucleotide binding pocket in eEF1A. The sequence is that of Elongation factor 1-beta (Eef1b) from Mus musculus (Mouse).